The primary structure comprises 77 residues: U8-lycotoxin-Ls1h (77 aa).

Positions methionine 1–valine 20 are cleaved as a signal peptide. The propeptide occupies glutamine 21–arginine 26.

This sequence belongs to the neurotoxin 19 (CSTX) family. 08 (U8-Lctx) subfamily. Contains 4 disulfide bonds. As to expression, expressed by the venom gland.

The protein resides in the secreted. The polypeptide is U8-lycotoxin-Ls1h (Lycosa singoriensis (Wolf spider)).